The primary structure comprises 321 residues: Mechanosensory protein 3 (321 aa).

2 consecutive LIM zinc-binding domains span residues Asn27–Ile86 and His87–Asp152. Residues Arg217–Lys276 constitute a DNA-binding region (homeobox).

As to quaternary structure, interacts with unc-86; the heterooligomer binds to the promoters of mec-3, mec-4 and mec-7. Expressed in the mechanosensory neurons ALML, ALMR, PLML, PLMR, AVM and PVM, and the FLPL and FLPR neurons.

The protein resides in the nucleus. Transcription factor. Specifies differentiation of the set of six touch receptor neurons (TRNs). May positively modulate expression of both its own gene and also of homeobox ARX homolog alr-1 in TRNs, forming a positive feedback loop with alr-1, thereby restricting the variability of expression of mec-3. Required to determine the identity of ALM sensory neurons, acting by interacting with unc-86, thereby preventing unc-86 cooperating with pag-3 to induce BDU-neuron specific genes. Binds cooperatively as a heterodimer with unc-86 to sites in the mec-3 gene promoter. Promotes outgrowth of lateral dendritic branches on the PVD nociceptive neurons, probably acting both directly, and upstream of zinc finger protein egl-46. The polypeptide is Mechanosensory protein 3 (mec-3) (Caenorhabditis elegans).